The sequence spans 450 residues: MQSSEGSPDMMDQKYNSVRLSPAASSRILYHVPCKVCRDHSSGKHYGIYACDGCAGFFKRSIRRSRQYVCKSQKQGLCVVDKTHRNQCRACRLRKCFEVGMNKDAVQHERGPRNSTLRRHMAMYKDAMMGAAEMPQIPPEILMNTAALTGFPGLPMPMPGVQRSHHHAALSAAFQPPPSAAVLDLSVPRVPHHPVHQGHHGFFSPTAAYMNALATRALPPTPPLMAAEHIKETAAEHLFKNVNWIKSVRAFTELPMPDQLLLLEESWKEFFILAMAQYLMPMNFAQLLFVYESENANREIVTIVAREVHAFQDVLNQLCHLNIDSTEYECLRAISLFRKSPPAASSTEDLANSSILTGSGSPNSSASAESRGLLESSKVAAMHNDARNALHNYISRTHPNQPLRFQTLLGVVTLMHKVSSFTIEELFFRKTIGDITIVRLISDMYSQRKI.

The nuclear receptor DNA-binding region spans 31-108 (HVPCKVCRDH…VGMNKDAVQH (78 aa)). NR C4-type zinc fingers lie at residues 34 to 54 (CKVC…CDGC) and 70 to 96 (CKSQ…LRKC). Positions 187-448 (VPRVPHHPVH…RLISDMYSQR (262 aa)) constitute an NR LBD domain.

Belongs to the nuclear hormone receptor family. NR2 subfamily. As to quaternary structure, monomer.

It localises to the nucleus. Orphan receptor that binds DNA as a monomer to hormone response elements (HRE) containing an extended core motif half-site sequence 5'-AAGTCA-3' in which the 5' flanking nucleotides participate in determining receptor specificity. This receptor binds to the consensus sequence [AG][AG]AAGTCAA. Plays a key role in the establishment of non-metameric domains at the anterior and posterior poles of the embryo. It may also play a role in the nervous system. The maternal terminal pathway activates the tll gene in the termini; TLL activity then represses segmentation and activates terminal-specific genes in these domains. Involved in the regulation of early eye development. In the embryonic visual system anlage drives cells to optic lobe as opposed to Bolwig's organ fate. The protein is Protein tailless (tll) of Drosophila virilis (Fruit fly).